The following is a 491-amino-acid chain: MESNCVQFLGNKTILITGAPGFLAKVLVEKILRLQPNVKKIYLLLRAPDEKSAMQRLRSEVMEIDLFKVLRNNLGEDNLNALMREKIVPVPGDISIDNLGLKDTDLIQRMWSEIDIIINIAATTNFDERYDIGLGINTFGALNVLNFAKKCVKGQLLLHVSTAYISGEQPGLLLEKPFKMGETLSGDRELDINIEHDLMKQKLKELQDCSDEEISQTMKDFGMARAKLHGWPNTYVFTKAMGEMLMGKYRENLPLVIIRPTMITSTIAEPFPGWIEGLKTLDSVIVAYGKGRLKCFLADSNSVFDLIPADMVVNAMVAAATAHSGDTGIQAIYHVGSSCKNPVTFGQLHDFTARYFAKRPLIGRNGSPIIVVKGTILSTMAQFSLYMTLRYKLPLQILRLINIVYPWSHGDNYSDLSRKIKLAMRLVELYQPYLLFKGIFDDLNTERLRMKRKENIKELDGSFEFDPKSIDWDNYITNTHIPGLITHVLKQ.

It belongs to the fatty acyl-CoA reductase family. In terms of tissue distribution, expressed in the endodermal cell layer surrounding the central vasculature in roots. Expressed in the hilum region of seeds. Expressed in lateral root tips, cotyledons, the shoot apex, young leaves, petals, stamen filaments, and receptacle of siliques.

The enzyme catalyses a long-chain fatty acyl-CoA + 2 NADPH + 2 H(+) = a long-chain primary fatty alcohol + 2 NADP(+) + CoA. In terms of biological role, catalyzes the reduction of fatty acyl-CoA to fatty alcohols. Catalyzes specifically the formation of C18:0 and C22:0 fatty alcohols. Provides the fatty alcohols required for synthesis of suberin in roots, seed coat and wound-induced leaf tissue. Provides the fatty alcohols required for synthesis of alkyl hydroxycinnamates in root waxes. The chain is Fatty acyl-CoA reductase 1 from Arabidopsis thaliana (Mouse-ear cress).